Consider the following 525-residue polypeptide: GMP synthase [glutamine-hydrolyzing] (525 aa).

The Glutamine amidotransferase type-1 domain occupies 16–205 (PVLVVDFGAQ…LHDFAGIGAR (190 aa)). The active-site Nucleophile is the cysteine 93. Active-site residues include histidine 179 and glutamate 181. A GMPS ATP-PPase domain is found at 206–399 (WTPANIANAL…LGLPEEIVAR (194 aa)). 233 to 239 (SGGVDSA) serves as a coordination point for ATP.

As to quaternary structure, homodimer.

It catalyses the reaction XMP + L-glutamine + ATP + H2O = GMP + L-glutamate + AMP + diphosphate + 2 H(+). It functions in the pathway purine metabolism; GMP biosynthesis; GMP from XMP (L-Gln route): step 1/1. Functionally, catalyzes the synthesis of GMP from XMP. This Mycobacterium marinum (strain ATCC BAA-535 / M) protein is GMP synthase [glutamine-hydrolyzing].